We begin with the raw amino-acid sequence, 594 residues long: Lipolysis-stimulated lipoprotein receptor (594 aa).

Residues 1-35 form the signal peptide; the sequence is MAPAASACAGAPGSHPATTIFVCLFLIIYCPDRAS. Residues 36–206 lie on the Extracellular side of the membrane; sequence AIQVTVPDPY…PGFRAGPLED (171 aa). Residues 89–181 form the Ig-like V-type domain; that stretch reads PASVDNQLNA…DLDGNNEAYA (93 aa). Cys-113 and Cys-165 are oxidised to a cystine. Residues 207-227 form a helical membrane-spanning segment; it reads WLFVVVVCLASLLFFLLLGIC. The Cytoplasmic segment spans residues 228 to 594; that stretch reads WCQCCPHTCC…LALSRESLVV (367 aa). Thr-283 bears the Phosphothreonine mark. Residue Ser-308 is modified to Phosphoserine; by MAPK8 and MAPK9. Phosphoserine is present on residues Ser-314, Ser-332, Ser-375, and Ser-379. Basic and acidic residues predominate over residues 375–387; that stretch reads SEVTSLHEDDWRS. Residues 375–594 are disordered; the sequence is SEVTSLHEDD…LALSRESLVV (220 aa). Thr-396 is modified (phosphothreonine). Phosphoserine is present on residues Ser-407, Ser-410, and Ser-436. Residues 435-444 show a composition bias toward basic and acidic residues; that stretch reads RSVDALDDIN. Residues 445–460 show a composition bias toward low complexity; the sequence is RPGSTESGRSSPPSSG. Residues Ser-471 and Ser-473 each carry the phosphoserine modification. The span at 472 to 550 shows a compositional bias: basic and acidic residues; it reads RSRDDLYDPD…GAGERRRVYR (79 aa). Tyr-478 carries the phosphotyrosine modification. Ser-576 is subject to Phosphoserine. Residue Lys-583 forms a Glycyl lysine isopeptide (Lys-Gly) (interchain with G-Cter in ubiquitin) linkage. Residues Ser-588 and Ser-591 each carry the phosphoserine modification.

The protein belongs to the immunoglobulin superfamily. LISCH7 family. In terms of assembly, homotrimer or homotetramer. Assembles into cell-cell contacts. Interacts (via the cytoplasmic domain) with MARVELD2 (via C-terminal cytoplasmic domain); the interaction is required to recruit MARVELD2 to tricellular contacts. Interacts with OCLN. In terms of processing, phosphorylation at Ser-308 by MAPK8/JNK1 and MAPK9/JNK2 may be required for exclusive localization at tricellular tight junstions. Post-translationally, polyubiquitinated at Lys-583 via 'Lys-63'-linked ubiquitin chains; deubiquitinated by USP53. As to expression, expressed in epithelial tissues (at protein level). Specifically expressed in liver and to a lower extent in kidney (at protein level). Also detected in brain, testis, ovaries, adrenal gland, intestine, muscle, and lung. In colon, only expressed in the lower portion of crypts. Expressed in the liver. In terms of tissue distribution, expressed in liver, stomach, small intestine and colon. Also detected in other epithelial tissues.

Its subcellular location is the cell membrane. It is found in the cell junction. The protein localises to the tight junction. Probable role in the clearance of triglyceride-rich lipoprotein from blood. Binds chylomicrons, LDL and VLDL in presence of free fatty acids and allows their subsequent uptake in the cells. Maintains epithelial barrier function by recruiting MARVELD2/tricellulin to tricellular tight junctions. The protein is Lipolysis-stimulated lipoprotein receptor of Mus musculus (Mouse).